A 121-amino-acid polypeptide reads, in one-letter code: Small ribosomal subunit protein uS13 (121 aa).

Residues 96-121 (PVRGQNTKNNARTRKGKAVAIAGKKK) are disordered. A compositionally biased stretch (basic residues) spans 106 to 121 (ARTRKGKAVAIAGKKK).

The protein belongs to the universal ribosomal protein uS13 family. In terms of assembly, part of the 30S ribosomal subunit. Forms a loose heterodimer with protein S19. Forms two bridges to the 50S subunit in the 70S ribosome.

Functionally, located at the top of the head of the 30S subunit, it contacts several helices of the 16S rRNA. In the 70S ribosome it contacts the 23S rRNA (bridge B1a) and protein L5 of the 50S subunit (bridge B1b), connecting the 2 subunits; these bridges are implicated in subunit movement. Contacts the tRNAs in the A and P-sites. This chain is Small ribosomal subunit protein uS13, found in Streptococcus agalactiae serotype Ia (strain ATCC 27591 / A909 / CDC SS700).